The following is a 276-amino-acid chain: NADPH-dependent 7-cyano-7-deazaguanine reductase (276 aa).

Position 83-85 (83-85 (IES)) interacts with substrate. 85 to 86 (SK) contacts NADPH. Cys184 (thioimide intermediate) is an active-site residue. Asp191 acts as the Proton donor in catalysis. Residue 223–224 (HE) participates in substrate binding. 252 to 253 (RG) contacts NADPH.

This sequence belongs to the GTP cyclohydrolase I family. QueF type 2 subfamily. Homodimer.

It localises to the cytoplasm. It carries out the reaction 7-aminomethyl-7-carbaguanine + 2 NADP(+) = 7-cyano-7-deazaguanine + 2 NADPH + 3 H(+). The protein operates within tRNA modification; tRNA-queuosine biosynthesis. Functionally, catalyzes the NADPH-dependent reduction of 7-cyano-7-deazaguanine (preQ0) to 7-aminomethyl-7-deazaguanine (preQ1). The protein is NADPH-dependent 7-cyano-7-deazaguanine reductase of Pseudomonas fluorescens (strain Pf0-1).